Here is a 136-residue protein sequence, read N- to C-terminus: MAEEPGVWSLLERAPIDWTEPWLIGLAAFHILCFIVTYISFKSYPLQICHFLLMVVLVSCAEYINEFAAMHWRAYSKQQYFDSSGMFISLAFSAPLLCNTIIIVVHWVYKTLCVMTELKTLQQKRKESREKRKKKE.

Residues 1-20 (MAEEPGVWSLLERAPIDWTE) are Perinuclear space-facing. The chain crosses the membrane as a helical span at residues 21 to 41 (PWLIGLAAFHILCFIVTYISF). Over 42–43 (KS) the chain is Nuclear. A helical membrane pass occupies residues 44–64 (YPLQICHFLLMVVLVSCAEYI). At 65-84 (NEFAAMHWRAYSKQQYFDSS) the chain is on the perinuclear space side. The helical transmembrane segment at 85–105 (GMFISLAFSAPLLCNTIIIVV) threads the bilayer. Residue histidine 106 is a topological domain, nuclear. Histidine 106 is a region of interest (DNA-binding). Positions 112-136 (LCVMTELKTLQQKRKESREKRKKKE) form a coiled coil.

The protein belongs to the TMEM18 family.

It is found in the nucleus membrane. The protein is Transmembrane protein 18 (tmem18) of Xenopus laevis (African clawed frog).